The sequence spans 128 residues: Putative pre-16S rRNA nuclease (128 aa).

This sequence belongs to the YqgF nuclease family.

It is found in the cytoplasm. Functionally, could be a nuclease involved in processing of the 5'-end of pre-16S rRNA. The polypeptide is Putative pre-16S rRNA nuclease (Sulfurovum sp. (strain NBC37-1)).